Consider the following 178-residue polypeptide: Neuroblastoma suppressor of tumorigenicity 1 (178 aa).

The N-terminal stretch at 1–16 is a signal peptide; it reads MLWVLVGAVLPVMLLA. 5 disulfides stabilise this stretch: C34/C84, C48/C98, C58/C117, C62/C119, and C81/C122. The CTCK domain occupies 34 to 123; the sequence is CEAKNITQIV…IVHCSCQACG (90 aa). Residues 132–178 are disordered; the sequence is NVYVQGEDSPGSQPGPHSHAHPHPGGQTPEPEEPPGAPQVEEEGAED. Residues 140-160 are compositionally biased toward low complexity; sequence SPGSQPGPHSHAHPHPGGQTP.

This sequence belongs to the DAN family. Homodimer.

Its subcellular location is the secreted. Possible candidate as a tumor suppressor gene of neuroblastoma. May play an important role in preventing cells from entering the final stage (G1/S) of the transformation process. This Mus musculus (Mouse) protein is Neuroblastoma suppressor of tumorigenicity 1 (Nbl1).